The following is a 415-amino-acid chain: Gamma-glutamyl phosphate reductase (415 aa).

The protein belongs to the gamma-glutamyl phosphate reductase family.

It is found in the cytoplasm. It catalyses the reaction L-glutamate 5-semialdehyde + phosphate + NADP(+) = L-glutamyl 5-phosphate + NADPH + H(+). The protein operates within amino-acid biosynthesis; L-proline biosynthesis; L-glutamate 5-semialdehyde from L-glutamate: step 2/2. Its function is as follows. Catalyzes the NADPH-dependent reduction of L-glutamate 5-phosphate into L-glutamate 5-semialdehyde and phosphate. The product spontaneously undergoes cyclization to form 1-pyrroline-5-carboxylate. This is Gamma-glutamyl phosphate reductase from Mycobacterium bovis (strain BCG / Pasteur 1173P2).